A 510-amino-acid chain; its full sequence is Inositol-3-phosphate synthase (510 aa).

NAD(+) contacts are provided by glycine 70, glycine 71, asparagine 72, asparagine 73, aspartate 143, isoleucine 180, glutamine 190, arginine 193, threonine 230, alanine 231, asparagine 232, threonine 233, glycine 281, serine 282, aspartate 306, serine 309, asparagine 340, asparagine 341, aspartate 342, lysine 355, glycine 393, aspartate 394, aspartate 422, and serine 423.

The protein belongs to the myo-inositol 1-phosphate synthase family. NAD(+) serves as cofactor.

The protein resides in the cytoplasm. It localises to the cytosol. It is found in the nucleus. The catalysed reaction is D-glucose 6-phosphate = 1D-myo-inositol 3-phosphate. Its pathway is polyol metabolism; myo-inositol biosynthesis; myo-inositol from D-glucose 6-phosphate: step 1/2. Key enzyme in myo-inositol biosynthesis pathway that catalyzes the conversion of glucose 6-phosphate to 1-myo-inositol 1-phosphate in a NAD-dependent manner. This Spirodela polyrhiza (Giant duckweed) protein is Inositol-3-phosphate synthase (TUR1).